A 353-amino-acid chain; its full sequence is Tectonin-2 (353 aa).

One can recognise a Ricin B-type lectin domain in the interval 44 to 93 (WIFDNDGYIRLAANHNLVLDVNGGAAKEGNTVLSYPDKKDHAKNQLWVNK). 6 consecutive repeat copies span residues 138–173 (SAWERHEGELNVVAVGAGNHDVWGVNHLEHIYHWDG), 174–210 (SKWHQIEGAATNISVGLDGTVWCVNKAHEIYRLDRGT), 211–247 (NKWSIVPGELVQVSVGNSHNIWGVNHLDAIYKWNADS), 248–282 (NSWTFVDGQLTNVSVGHDGTVYGVNRAGNIYHYNG), 283–318 (NSWDAVSGELVQIHVANKDLIVGVNKAGHVYRLKHG), and 319–353 (KDWEKLEGELSWVAVGHGGELWGANSAHNIYKALL). Residues 138 to 353 (SAWERHEGEL…SAHNIYKALL (216 aa)) are 6 X approximate tandem repeats.

This sequence belongs to the tectonin family.

It localises to the cell surface. It is found in the cytoplasmic vesicle membrane. Functionally, probably involved in bacterial recognition. May be a lectin that function as part of a transmembrane signaling complex during phagocytosis. In Physarum polycephalum (Slime mold), this protein is Tectonin-2 (TECB).